The chain runs to 327 residues: 2-keto-3-deoxygluconate permease (327 aa).

A run of 10 helical transmembrane segments spans residues 10–30, 42–62, 73–93, 95–115, 139–159, 163–183, 199–219, 224–244, 254–274, and 289–309; these read IPGG…TFSP, GMIT…GASI, KSGT…AIAS, IIPE…LALV, AGAF…IILG, IASF…VGFA, VQTL…LTVI, LLGI…LIIA, TAGI…VLIA, and SLVA…TSIW.

It belongs to the KdgT transporter family.

It is found in the cell inner membrane. It catalyses the reaction 2-dehydro-3-deoxy-D-gluconate(in) + H(+)(in) = 2-dehydro-3-deoxy-D-gluconate(out) + H(+)(out). Catalyzes the proton-dependent uptake of 2-keto-3-deoxygluconate (KDG) into the cell. The sequence is that of 2-keto-3-deoxygluconate permease from Escherichia coli O7:K1 (strain IAI39 / ExPEC).